Here is a 370-residue protein sequence, read N- to C-terminus: NADH-quinone oxidoreductase subunit D (370 aa).

It belongs to the complex I 49 kDa subunit family. As to quaternary structure, NDH-1 is composed of 14 different subunits. Subunits NuoB, C, D, E, F, and G constitute the peripheral sector of the complex.

It localises to the cell membrane. The catalysed reaction is a quinone + NADH + 5 H(+)(in) = a quinol + NAD(+) + 4 H(+)(out). In terms of biological role, NDH-1 shuttles electrons from NADH, via FMN and iron-sulfur (Fe-S) centers, to quinones in the respiratory chain. The immediate electron acceptor for the enzyme in this species is believed to be a menaquinone. Couples the redox reaction to proton translocation (for every two electrons transferred, four hydrogen ions are translocated across the cytoplasmic membrane), and thus conserves the redox energy in a proton gradient. The polypeptide is NADH-quinone oxidoreductase subunit D (Clostridium beijerinckii (strain ATCC 51743 / NCIMB 8052) (Clostridium acetobutylicum)).